Consider the following 424-residue polypeptide: MLARKSIIPEEYVLARIAAENLRKPRIRDRLPKARFIAKSGACNLAHKNIREQGRFLQDIFTTLVDLKWRHTLVIFTMSFLCSWLLFAIMWWLVAFAHGDIYAYMEKGITEKSGLESAVCVTNVRSFTSAFLFSIEVQVTIGFGGRMMTEECPLAITVLILQNIVGLIINAVMLGCIFMKTAQAHRRAETLIFSRHAVIAVRNGKLCFMFRVGDLRKSMIISASVRIQVVKKTTTPEGEVVPIHQQDIPVDNPIESNNIFLVAPLIICHVIDKRSPLYDISATDLVNQDLEVIVILEGVVETTGITTQARTSYIAEEIQWGHRFVSIVTEEEGVYSVDYSKFGNTVRVAAPRCSARELDEKPSILIQTLQKSELSHQNSLRKRNSMRRNNSMRRSNSIRRNNSSLMVPKVQFMTPEGNQCPSES.

At 1–69 (MLARKSIIPE…IFTTLVDLKW (69 aa)) the chain is on the cytoplasmic side. Residue S6 is modified to Phosphoserine. A helical membrane pass occupies residues 70-94 (RHTLVIFTMSFLCSWLLFAIMWWLV). Over 95-126 (AFAHGDIYAYMEKGITEKSGLESAVCVTNVRS) the chain is Extracellular. The helical; Pore-forming intramembrane region spans 127–138 (FTSAFLFSIEVQ). The segment at residues 139–145 (VTIGFGG) is an intramembrane region (pore-forming). Positions 140–145 (TIGFGG) match the Selectivity filter motif. Residues 146 to 154 (RMMTEECPL) are Extracellular-facing. A helical transmembrane segment spans residues 155–176 (AITVLILQNIVGLIINAVMLGC). Residues 177 to 424 (IFMKTAQAHR…PEGNQCPSES (248 aa)) lie on the Cytoplasmic side of the membrane. Residues 374 to 424 (LSHQNSLRKRNSMRRNNSMRRSNSIRRNNSSLMVPKVQFMTPEGNQCPSES) are disordered. The segment covering 387–404 (RRNNSMRRSNSIRRNNSS) has biased composition (low complexity).

Belongs to the inward rectifier-type potassium channel (TC 1.A.2.1) family. KCNJ8 subfamily. In terms of assembly, interacts with ABCC9. Widely expressed, including in pancreatic islets, pituitary, skeletal muscle and heart.

The protein resides in the membrane. The enzyme catalyses K(+)(in) = K(+)(out). In terms of biological role, inward rectifier potassium channels are characterized by a greater tendency to allow potassium to flow into the cell rather than out of it. Their voltage dependence is regulated by the concentration of extracellular potassium; as external potassium is raised, the voltage range of the channel opening shifts to more positive voltages. The inward rectification is mainly due to the blockage of outward current by internal magnesium. This channel is activated by internal ATP and can be blocked by external barium. Can form a sulfonyllurea-sensitive but ATP-insensitive potassium channel with ABCC9. The protein is ATP-sensitive inward rectifier potassium channel 8 (Kcnj8) of Rattus norvegicus (Rat).